The sequence spans 944 residues: Envelope glycoprotein B (944 aa).

Disordered regions lie at residues 1 to 37 (MGPP…RPGS) and 68 to 108 (TDGG…RVTG). The first 55 residues, 1–55 (MGPPPPLRRQRLLLPRPSRRRPPARLASGRRSSRPGSSWTWYATLIASLVWYPTV), serve as a signal peptide directing secretion. The segment covering 24–37 (ARLASGRRSSRPGS) has biased composition (low complexity). At 56 to 785 (SSTTLEATVV…GGFVSFFTNP (730 aa)) the chain is on the virion surface side. Positions 71 to 85 (GATGQASGGGGGGAG) are enriched in gly residues. Residues 89–99 (PSESPETSADT) show a composition bias toward polar residues. N114 carries N-linked (GlcNAc...) asparagine; by host glycosylation. 5 cysteine pairs are disulfide-bonded: C125-C577, C142-C533, C215-C280, C372-C420, and C608-C645. The segment at 182–188 (SYAYIYT) is involved in fusion and/or binding to host membrane. N-linked (GlcNAc...) asparagine; by host glycosylation occurs at N238. The interval 267–274 (GSTWLYKE) is involved in fusion and/or binding to host membrane. N-linked (GlcNAc...) asparagine; by host glycosylation is found at N369, N409, N414, N426, N481, N485, and N620. 2 hydrophobic membrane proximal region regions span residues 731-783 (ITSK…SFFT) and 762-782 (LVLG…VSFF). A helical membrane pass occupies residues 786–806 (FGSLTLIILVVAVVVIVFLLY). Over 807-944 (QRQRSAVRQP…RDTGSDSELA (138 aa)) the chain is Intravirion. Disordered regions lie at residues 834 to 878 (TVTT…SATA) and 902 to 944 (REVP…SELA). Residues 931–934 (YRRL) carry the Internalization motif motif.

The protein belongs to the herpesviridae glycoprotein B family. In terms of assembly, homotrimer; disulfide-linked. Binds to heparan sulfate proteoglycans. Interacts with gH/gL heterodimer. In terms of processing, a proteolytic cleavage by host furin generates two subunits that remain linked by disulfide bonds.

It localises to the virion membrane. The protein localises to the host cell membrane. The protein resides in the host endosome membrane. It is found in the host Golgi apparatus membrane. Envelope glycoprotein that forms spikes at the surface of virion envelope. Essential for the initial attachment to heparan sulfate moieties of the host cell surface proteoglycans. Involved in fusion of viral and cellular membranes leading to virus entry into the host cell. Following initial binding to its host receptors, membrane fusion is mediated by the fusion machinery composed at least of gB and the heterodimer gH/gL. May be involved in the fusion between the virion envelope and the outer nuclear membrane during virion egress. The protein is Envelope glycoprotein B of Tupaiid herpesvirus (strain 2) (TuHV-2).